The chain runs to 107 residues: ATP-dependent Clp protease adapter protein ClpS (107 aa).

This sequence belongs to the ClpS family. Binds to the N-terminal domain of the chaperone ClpA.

In terms of biological role, involved in the modulation of the specificity of the ClpAP-mediated ATP-dependent protein degradation. This chain is ATP-dependent Clp protease adapter protein ClpS, found in Acinetobacter baylyi (strain ATCC 33305 / BD413 / ADP1).